We begin with the raw amino-acid sequence, 404 residues long: Cysteine desulfurase IscS (404 aa).

Residues 75–76, Asn-155, Gln-183, and 203–205 each bind pyridoxal 5'-phosphate; these read AT and SAH. Lys-206 carries the post-translational modification N6-(pyridoxal phosphate)lysine. Thr-243 contributes to the pyridoxal 5'-phosphate binding site. Cys-328 serves as the catalytic Cysteine persulfide intermediate. Residue Cys-328 coordinates [2Fe-2S] cluster.

Belongs to the class-V pyridoxal-phosphate-dependent aminotransferase family. NifS/IscS subfamily. Homodimer. Forms a heterotetramer with IscU, interacts with other sulfur acceptors. Pyridoxal 5'-phosphate serves as cofactor.

The protein resides in the cytoplasm. It catalyses the reaction (sulfur carrier)-H + L-cysteine = (sulfur carrier)-SH + L-alanine. It functions in the pathway cofactor biosynthesis; iron-sulfur cluster biosynthesis. In terms of biological role, master enzyme that delivers sulfur to a number of partners involved in Fe-S cluster assembly, tRNA modification or cofactor biosynthesis. Catalyzes the removal of elemental sulfur atoms from cysteine to produce alanine. Functions as a sulfur delivery protein for Fe-S cluster synthesis onto IscU, an Fe-S scaffold assembly protein, as well as other S acceptor proteins. The sequence is that of Cysteine desulfurase IscS from Pseudomonas syringae pv. tomato (strain ATCC BAA-871 / DC3000).